A 141-amino-acid polypeptide reads, in one-letter code: Nucleoside diphosphate kinase (141 aa).

ATP is bound by residues lysine 11, phenylalanine 59, arginine 87, threonine 93, arginine 104, and asparagine 114. Residue histidine 117 is the Pros-phosphohistidine intermediate of the active site.

It belongs to the NDK family. In terms of assembly, homotetramer. The cofactor is Mg(2+).

The protein resides in the cytoplasm. It catalyses the reaction a 2'-deoxyribonucleoside 5'-diphosphate + ATP = a 2'-deoxyribonucleoside 5'-triphosphate + ADP. The enzyme catalyses a ribonucleoside 5'-diphosphate + ATP = a ribonucleoside 5'-triphosphate + ADP. Functionally, major role in the synthesis of nucleoside triphosphates other than ATP. The ATP gamma phosphate is transferred to the NDP beta phosphate via a ping-pong mechanism, using a phosphorylated active-site intermediate. In Histophilus somni (strain 129Pt) (Haemophilus somnus), this protein is Nucleoside diphosphate kinase.